The chain runs to 868 residues: mRNA-capping enzyme (868 aa).

Catalysis depends on Lys-282, which acts as the N6-GMP-lysine intermediate. Positions 594–868 constitute an mRNA cap 0 methyltransferase domain; sequence GIYRAQTALI…LFGFICLRKN (275 aa). S-adenosyl-L-methionine contacts are provided by residues Lys-607, Gly-624, Asp-646, and 710–712; that span reads LFI.

It in the N-terminal section; belongs to the dsDNA virus mRNA guanylyltransferase family. This sequence in the C-terminal section; belongs to the class I-like SAM-binding methyltransferase superfamily. mRNA cap 0 methyltransferase family. Part of the viral DNA-directed RNA polymerase that consists of 8 polII-like subunits (RPB1, RPB2, RPB3, RPB5, RPB6, RPB7, RPB9, RPB10), a capping enzyme and a termination factor.

The protein localises to the virion. It carries out the reaction a 5'-end triphospho-ribonucleoside in mRNA + H2O = a 5'-end diphospho-ribonucleoside in mRNA + phosphate + H(+). It catalyses the reaction a 5'-end diphospho-ribonucleoside in mRNA + GTP + H(+) = a 5'-end (5'-triphosphoguanosine)-ribonucleoside in mRNA + diphosphate. The enzyme catalyses a 5'-end (5'-triphosphoguanosine)-ribonucleoside in mRNA + S-adenosyl-L-methionine = a 5'-end (N(7)-methyl 5'-triphosphoguanosine)-ribonucleoside in mRNA + S-adenosyl-L-homocysteine. The protein operates within mRNA processing; mRNA capping. Its function is as follows. Probably catalyzes the second reaction in the mRNA cap formation pathway. Forms a covalent complex with GTP. The polypeptide is mRNA-capping enzyme (Ornithodoros (relapsing fever ticks)).